The sequence spans 322 residues: Mas-related G-protein coupled receptor member X1 (322 aa).

Topologically, residues 1-30 (MDPTISSHDTESTPLNETGHPNCTPILTLS) are extracellular. N16 carries an N-linked (GlcNAc...) asparagine glycan. The helical transmembrane segment at 31 to 51 (FLVLITTLVGLAGNTIVLWLL) threads the bilayer. The Cytoplasmic portion of the chain corresponds to 52–59 (GFRMRRKA). A helical membrane pass occupies residues 60–80 (ISVYILNLALADSFFLCCHFI). Residues 81-100 (DSLLRIIDFYGLYAHKLSKD) are Extracellular-facing. A helical membrane pass occupies residues 101–121 (ILGNAAIIPYISGLSILSAIS). Residues 122 to 142 (TERCLCVLWPIWYHCHRPRNM) are Cytoplasmic-facing. The chain crosses the membrane as a helical span at residues 143–163 (SAIICALIWVLSFLMGILDWF). Topologically, residues 164–179 (SGFLGETHHHLWKNVD) are extracellular. A helical transmembrane segment spans residues 180–200 (FIITAFLIFLFMLLSGSSLAL). Residues 201–223 (LLRILCGPRRKPLSRLYVTIALT) lie on the Cytoplasmic side of the membrane. A helical transmembrane segment spans residues 224–244 (VMVYLICGLPLGLYLFLLYWF). Over 245–257 (GVHLHYPFCHIYQ) the chain is Extracellular. The helical transmembrane segment at 258-278 (VTAVLSCVNSSANPIIYFLVG) threads the bilayer. Over 279–322 (SFRQHRKHRSLKRVLKRALEDTPEEDEYTDSHLHKTTEISESRY) the chain is Cytoplasmic.

Belongs to the G-protein coupled receptor 1 family. Mas subfamily. Expressed in a subset of IB4-positive small diameter nociceptive dorsal root neurons.

The protein localises to the cell membrane. Functionally, orphan receptor activated by neuropeptides terminating in Arg-Phe or Arg-Phe-amide. Mediates its action by association with G proteins that activate a phosphatidylinositol-calcium second messenger system. Its effect is mediated by G(q) and G(11) proteins. May regulate the function of nociceptive neurons by modulation of pain perception. This chain is Mas-related G-protein coupled receptor member X1, found in Mus musculus (Mouse).